The following is a 742-amino-acid chain: Photosystem I P700 chlorophyll a apoprotein A2 (742 aa).

Helical transmembrane passes span 46-69 (LFST…FHIA), 135-158 (LFQG…LHLQ), 175-199 (LNHH…HVAI), 273-291 (IAHH…GHMY), 336-359 (LHFQ…QHMG), 375-401 (SALY…IFFV), 423-445 (ALIS…IYVH), and 525-543 (FLVH…LILI). [4Fe-4S] cluster-binding residues include Cys-567 and Cys-576. The next 2 membrane-spanning stretches (helical) occupy residues 583 to 604 (ATYL…YWHW) and 651 to 673 (LSPW…MFLI). Positions 662, 670, and 678 each coordinate divinyl chlorophyll a. Trp-679 lines the phylloquinone pocket. The helical transmembrane segment at 715–735 (LVGLTHFTVGNFVTFGAFVIA) threads the bilayer.

The protein belongs to the PsaA/PsaB family. In terms of assembly, the PsaA/B heterodimer binds the P700 divinyl chlorophyll special pair and subsequent electron acceptors. PSI consists of a core antenna complex that captures photons, and an electron transfer chain that converts photonic excitation into a charge separation. The cyanobacterial PSI reaction center is composed of one copy each of PsaA,B,C,D,E,F,I,J,K,L,M and X, and forms trimeric complexes. PSI electron transfer chain: 5 divinyl chlorophyll a, 1 divinyl chlorophyll a', 2 phylloquinones and 3 4Fe-4S clusters. PSI core antenna: 90 divinyl chlorophyll a, 22 carotenoids, 3 phospholipids and 1 galactolipid. P700 is a divinyl chlorophyll a/divinyl chlorophyll a' dimer, A0 is one or more divinyl chlorophyll a, A1 is one or both phylloquinones and FX is a shared 4Fe-4S iron-sulfur center. is required as a cofactor.

The protein localises to the cellular thylakoid membrane. The catalysed reaction is reduced [plastocyanin] + hnu + oxidized [2Fe-2S]-[ferredoxin] = oxidized [plastocyanin] + reduced [2Fe-2S]-[ferredoxin]. Functionally, psaA and PsaB bind P700, the primary electron donor of photosystem I (PSI), as well as the electron acceptors A0, A1 and FX. PSI is a plastocyanin/cytochrome c6-ferredoxin oxidoreductase, converting photonic excitation into a charge separation, which transfers an electron from the donor P700 chlorophyll pair to the spectroscopically characterized acceptors A0, A1, FX, FA and FB in turn. Oxidized P700 is reduced on the lumenal side of the thylakoid membrane by plastocyanin or cytochrome c6. In Prochlorococcus marinus (strain NATL2A), this protein is Photosystem I P700 chlorophyll a apoprotein A2.